The chain runs to 171 residues: MSKANSFNKEDLIACGHGELFGEHSPRLPIDNMLMIDRITKINADGGEFGKGEIVAELDINPELWFFKCHFDGDPVMPGCLGLDALWQLVGFFLGWEGAEGKGRALGVGEVKFTGQVLPDAKKVTYKLTVKRKVYRKLVMGIADAVMEVDGREIYSATDLKVGIFKDTSSF.

The active site involves histidine 70.

Belongs to the thioester dehydratase family. FabA subfamily. As to quaternary structure, homodimer.

Its subcellular location is the cytoplasm. It catalyses the reaction a (3R)-hydroxyacyl-[ACP] = a (2E)-enoyl-[ACP] + H2O. The catalysed reaction is (3R)-hydroxydecanoyl-[ACP] = (2E)-decenoyl-[ACP] + H2O. The enzyme catalyses (2E)-decenoyl-[ACP] = (3Z)-decenoyl-[ACP]. The protein operates within lipid metabolism; fatty acid biosynthesis. Its function is as follows. Necessary for the introduction of cis unsaturation into fatty acids. Catalyzes the dehydration of (3R)-3-hydroxydecanoyl-ACP to E-(2)-decenoyl-ACP and then its isomerization to Z-(3)-decenoyl-ACP. Can catalyze the dehydratase reaction for beta-hydroxyacyl-ACPs with saturated chain lengths up to 16:0, being most active on intermediate chain length. This is 3-hydroxydecanoyl-[acyl-carrier-protein] dehydratase from Shewanella woodyi (strain ATCC 51908 / MS32).